Consider the following 140-residue polypeptide: UPF0225 protein SAV_6631 (140 aa).

A disordered region spans residues 1-22 (MSKSRRTRSTSRPTSRPQPASC). A compositionally biased stretch (low complexity) spans 10 to 19 (TSRPTSRPQP).

The protein belongs to the UPF0225 family.

The chain is UPF0225 protein SAV_6631 from Streptomyces avermitilis (strain ATCC 31267 / DSM 46492 / JCM 5070 / NBRC 14893 / NCIMB 12804 / NRRL 8165 / MA-4680).